Consider the following 138-residue polypeptide: Nucleoside diphosphate kinase (138 aa).

K9, F57, R85, T91, R102, and N112 together coordinate ATP. H115 acts as the Pros-phosphohistidine intermediate in catalysis.

The protein belongs to the NDK family. As to quaternary structure, homotetramer. Mg(2+) serves as cofactor.

It localises to the cytoplasm. It carries out the reaction a 2'-deoxyribonucleoside 5'-diphosphate + ATP = a 2'-deoxyribonucleoside 5'-triphosphate + ADP. The catalysed reaction is a ribonucleoside 5'-diphosphate + ATP = a ribonucleoside 5'-triphosphate + ADP. Functionally, major role in the synthesis of nucleoside triphosphates other than ATP. The ATP gamma phosphate is transferred to the NDP beta phosphate via a ping-pong mechanism, using a phosphorylated active-site intermediate. The sequence is that of Nucleoside diphosphate kinase from Deinococcus geothermalis (strain DSM 11300 / CIP 105573 / AG-3a).